A 245-amino-acid polypeptide reads, in one-letter code: 1-(5-phosphoribosyl)-5-[(5-phosphoribosylamino)methylideneamino] imidazole-4-carboxamide isomerase (245 aa).

Asp-7 acts as the Proton acceptor in catalysis. The active-site Proton donor is Asp-129.

This sequence belongs to the HisA/HisF family.

The protein resides in the cytoplasm. It carries out the reaction 1-(5-phospho-beta-D-ribosyl)-5-[(5-phospho-beta-D-ribosylamino)methylideneamino]imidazole-4-carboxamide = 5-[(5-phospho-1-deoxy-D-ribulos-1-ylimino)methylamino]-1-(5-phospho-beta-D-ribosyl)imidazole-4-carboxamide. It functions in the pathway amino-acid biosynthesis; L-histidine biosynthesis; L-histidine from 5-phospho-alpha-D-ribose 1-diphosphate: step 4/9. In Shewanella halifaxensis (strain HAW-EB4), this protein is 1-(5-phosphoribosyl)-5-[(5-phosphoribosylamino)methylideneamino] imidazole-4-carboxamide isomerase.